The following is a 206-amino-acid chain: Large ribosomal subunit protein uL4 (206 aa).

Residues 44–78 (RSGNRAQKDREQVKHTTKKPWRQKGTGRARAGMSS) are disordered. The segment covering 58–70 (HTTKKPWRQKGTG) has biased composition (basic residues).

Belongs to the universal ribosomal protein uL4 family. Part of the 50S ribosomal subunit.

Functionally, one of the primary rRNA binding proteins, this protein initially binds near the 5'-end of the 23S rRNA. It is important during the early stages of 50S assembly. It makes multiple contacts with different domains of the 23S rRNA in the assembled 50S subunit and ribosome. Its function is as follows. Forms part of the polypeptide exit tunnel. This is Large ribosomal subunit protein uL4 from Paraburkholderia phytofirmans (strain DSM 17436 / LMG 22146 / PsJN) (Burkholderia phytofirmans).